A 305-amino-acid chain; its full sequence is rRNA 2'-O-methyltransferase fibrillarin (305 aa).

The segment at 1-70 is disordered; that stretch reads MAYTPGSRGG…SGGRGGAKGG (70 aa). A compositionally biased stretch (gly residues) spans 7-69; sequence SRGGRGGSRG…SSGGRGGAKG (63 aa). Residues Ser111 and Ser114 each carry the phosphoserine modification. S-adenosyl-L-methionine-binding positions include 160–161, 179–180, 204–205, and 224–227; these read TS, EF, DA, and DVAQ.

It belongs to the methyltransferase superfamily. Fibrillarin family. As to quaternary structure, component of box C/D small nucleolar ribonucleoprotein (snoRNP) particles. In terms of processing, by homology to other fibrillarins, some or all of the N-terminal domain arginines are modified to asymmetric dimethylarginine (DMA).

Its subcellular location is the nucleus. It localises to the nucleolus. The catalysed reaction is L-glutaminyl-[histone H2A] + S-adenosyl-L-methionine = N(5)-methyl-L-glutaminyl-[histone H2A] + S-adenosyl-L-homocysteine + H(+). Functionally, S-adenosyl-L-methionine-dependent methyltransferase that has the ability to methylate both RNAs and proteins. Involved in pre-rRNA processing by catalyzing the site-specific 2'-hydroxyl methylation of ribose moieties in pre-ribosomal RNA. Site specificity is provided by a guide RNA that base pairs with the substrate. Methylation occurs at a characteristic distance from the sequence involved in base pairing with the guide RNA. Also acts as a protein methyltransferase by mediating methylation of 'Gln-105' of histone H2A (H2AQ105me), a modification that impairs binding of the FACT complex and is specifically present at 35S ribosomal DNA locus. This chain is rRNA 2'-O-methyltransferase fibrillarin (fib1), found in Schizosaccharomyces pombe (strain 972 / ATCC 24843) (Fission yeast).